Here is a 224-residue protein sequence, read N- to C-terminus: Large ribosomal subunit protein uL1c (224 aa).

It belongs to the universal ribosomal protein uL1 family. In terms of assembly, part of the 50S ribosomal subunit.

The protein resides in the plastid. It localises to the chloroplast. Its function is as follows. Binds directly to 23S rRNA. Might be involved in E site tRNA release (Potential). The polypeptide is Large ribosomal subunit protein uL1c (rpl1) (Cyanidioschyzon merolae (strain NIES-3377 / 10D) (Unicellular red alga)).